Here is a 447-residue protein sequence, read N- to C-terminus: tRNA (guanine(37)-N(1))-methyltransferase (447 aa).

Residues H241, D285 to L286, and D313 to V314 contribute to the S-adenosyl-L-methionine site.

This sequence belongs to the class I-like SAM-binding methyltransferase superfamily. TRM5/TYW2 family. As to quaternary structure, monomer.

It localises to the mitochondrion matrix. Its subcellular location is the nucleus. The protein localises to the cytoplasm. The catalysed reaction is guanosine(37) in tRNA + S-adenosyl-L-methionine = N(1)-methylguanosine(37) in tRNA + S-adenosyl-L-homocysteine + H(+). Its function is as follows. Specifically methylates the N1 position of guanosine-37 in various cytoplasmic and mitochondrial tRNAs. Methylation is not dependent on the nature of the nucleoside 5' of the target nucleoside. This is the first step in the biosynthesis of wybutosine (yW), a modified base adjacent to the anticodon of tRNAs and required for accurate decoding. The protein is tRNA (guanine(37)-N(1))-methyltransferase of Giardia intestinalis (strain ATCC 50803 / WB clone C6) (Giardia lamblia).